We begin with the raw amino-acid sequence, 619 residues long: Replication restart protein PriA (619 aa).

The Helicase ATP-binding domain occupies 119–285; it reads LKELQKHPAS…KDKALVRLKG (167 aa). Residue 132 to 139 coordinates ATP; sequence GDTGSGKT. Positions 228–231 match the DEAH box motif; sequence DEEH. Cysteine 336, cysteine 339, cysteine 345, cysteine 348, cysteine 363, cysteine 366, cysteine 376, and cysteine 379 together coordinate Zn(2+). A Helicase C-terminal domain is found at 371–532; sequence PIPKICNACQ…ELYPPFSRLC (162 aa).

Belongs to the helicase family. PriA subfamily. As to quaternary structure, component of the replication restart primosome. It depends on Zn(2+) as a cofactor.

It catalyses the reaction Couples ATP hydrolysis with the unwinding of duplex DNA by translocating in the 3'-5' direction.. It carries out the reaction ATP + H2O = ADP + phosphate + H(+). Its function is as follows. Initiates the restart of stalled replication forks, which reloads the replicative helicase on sites other than the origin of replication. Recognizes and binds to abandoned replication forks and remodels them to uncover a helicase loading site. Promotes assembly of the primosome at these replication forks. This is Replication restart protein PriA from Helicobacter pylori (strain J99 / ATCC 700824) (Campylobacter pylori J99).